A 290-amino-acid polypeptide reads, in one-letter code: Mitochondrial dicarboxylate carrier (290 aa).

3 Solcar repeats span residues 6 to 90 (TKRL…VKKQ), 101 to 188 (QKAL…IKQT), and 197 to 281 (DNLQ…LRLK). The next 3 helical transmembrane spans lie at 12 to 32 (WYFGGVAGAMAACCTHPLDLL), 65 to 84 (GVSASVLRQLTYSTTRFGIY), and 103 to 123 (ALLAGFAGACGGMVGTPGDLV). N6-acetyllysine is present on Lys-159. The next 3 membrane-spanning stretches (helical) occupy residues 163 to 182 (GATMATSRAILMTIGQLSFY), 203 to 223 (FASSISAASVATVMTQPLDVM), and 256 to 276 (GFIPAWARLAPHTVLTFIFFE).

Belongs to the mitochondrial carrier (TC 2.A.29) family.

The protein resides in the mitochondrion inner membrane. The enzyme catalyses (S)-malate(in) + phosphate(out) = (S)-malate(out) + phosphate(in). The catalysed reaction is malonate(out) + (S)-malate(in) = malonate(in) + (S)-malate(out). It carries out the reaction (S)-malate(in) + succinate(out) = (S)-malate(out) + succinate(in). It catalyses the reaction (S)-malate(in) + sulfate(out) = (S)-malate(out) + sulfate(in). The enzyme catalyses 2 thiosulfate(out) + (S)-malate(in) = 2 thiosulfate(in) + (S)-malate(out). The catalysed reaction is malonate(out) + phosphate(in) = malonate(in) + phosphate(out). It carries out the reaction succinate(out) + phosphate(in) = succinate(in) + phosphate(out). It catalyses the reaction sulfate(out) + phosphate(in) = sulfate(in) + phosphate(out). The enzyme catalyses 2 thiosulfate(out) + phosphate(in) = 2 thiosulfate(in) + phosphate(out). The catalysed reaction is malonate(out) + succinate(in) = malonate(in) + succinate(out). Its function is as follows. Catalyzes the electroneutral exchange or flux of physiologically important metabolites such as dicarboxylates (malonate, malate, succinate), inorganic sulfur-containing anions, and phosphate, across mitochondrial inner membrane. Plays an important role in gluconeogenesis, fatty acid metabolism, urea synthesis, and sulfur metabolism, by supplying the substrates for the different metabolic processes. In Caenorhabditis elegans, this protein is Mitochondrial dicarboxylate carrier.